The following is a 219-amino-acid chain: Arginine transport system permease protein ArtQ (219 aa).

A run of 5 helical transmembrane segments spans residues 19-39, 51-73, 88-108, 149-169, and 187-207; these read LAIT…LGIV, FIWI…QLMI, QFWA…SEII, AIVN…VIGL, and LEPL…LTFI. An ABC transmembrane type-1 domain is found at 19-208; the sequence is LAITLKIVVV…VLVLILTFIG (190 aa).

It belongs to the binding-protein-dependent transport system permease family. HisMQ subfamily.

The protein localises to the cell membrane. Functionally, part of a binding-protein-dependent transport system for arginine. Probably responsible for the translocation of the substrate across the membrane. This Bacillus subtilis (strain 168) protein is Arginine transport system permease protein ArtQ (artQ).